We begin with the raw amino-acid sequence, 227 residues long: Cytidylate kinase (227 aa).

An ATP-binding site is contributed by Gly-10–Thr-18.

Belongs to the cytidylate kinase family. Type 1 subfamily.

Its subcellular location is the cytoplasm. The catalysed reaction is CMP + ATP = CDP + ADP. It carries out the reaction dCMP + ATP = dCDP + ADP. This is Cytidylate kinase from Acinetobacter baylyi (strain ATCC 33305 / BD413 / ADP1).